Reading from the N-terminus, the 139-residue chain is Nucleoside diphosphate kinase (139 aa).

ATP contacts are provided by Lys10, Phe58, Arg86, Thr92, Arg103, and Asn113. His116 acts as the Pros-phosphohistidine intermediate in catalysis.

The protein belongs to the NDK family. In terms of assembly, homotetramer. Requires Mg(2+) as cofactor.

The protein localises to the cytoplasm. The catalysed reaction is a 2'-deoxyribonucleoside 5'-diphosphate + ATP = a 2'-deoxyribonucleoside 5'-triphosphate + ADP. The enzyme catalyses a ribonucleoside 5'-diphosphate + ATP = a ribonucleoside 5'-triphosphate + ADP. Major role in the synthesis of nucleoside triphosphates other than ATP. The ATP gamma phosphate is transferred to the NDP beta phosphate via a ping-pong mechanism, using a phosphorylated active-site intermediate. This is Nucleoside diphosphate kinase from Caulobacter sp. (strain K31).